Consider the following 155-residue polypeptide: SsrA-binding protein (155 aa).

The protein belongs to the SmpB family.

It is found in the cytoplasm. Functionally, required for rescue of stalled ribosomes mediated by trans-translation. Binds to transfer-messenger RNA (tmRNA), required for stable association of tmRNA with ribosomes. tmRNA and SmpB together mimic tRNA shape, replacing the anticodon stem-loop with SmpB. tmRNA is encoded by the ssrA gene; the 2 termini fold to resemble tRNA(Ala) and it encodes a 'tag peptide', a short internal open reading frame. During trans-translation Ala-aminoacylated tmRNA acts like a tRNA, entering the A-site of stalled ribosomes, displacing the stalled mRNA. The ribosome then switches to translate the ORF on the tmRNA; the nascent peptide is terminated with the 'tag peptide' encoded by the tmRNA and targeted for degradation. The ribosome is freed to recommence translation, which seems to be the essential function of trans-translation. The polypeptide is SsrA-binding protein (Alkaliphilus oremlandii (strain OhILAs) (Clostridium oremlandii (strain OhILAs))).